An 86-amino-acid chain; its full sequence is Progonadoliberin-2 (86 aa).

The signal sequence occupies residues 1–24 (MVSVARLVFMLGPLLCLGAQLSSS). Gln25 bears the Pyrrolidone carboxylic acid mark. Gly34 bears the Glycine amide mark.

Belongs to the GnRH family.

Its subcellular location is the secreted. Its function is as follows. Stimulates the secretion of gonadotropins. This Oncorhynchus mykiss (Rainbow trout) protein is Progonadoliberin-2 (gnrh2).